Consider the following 34-residue polypeptide: Photosystem II reaction center protein M (34 aa).

A helical transmembrane segment spans residues 5 to 25; that stretch reads ILAFIATALFILVPTAFLLII.

The protein belongs to the PsbM family. In terms of assembly, PSII is composed of 1 copy each of membrane proteins PsbA, PsbB, PsbC, PsbD, PsbE, PsbF, PsbH, PsbI, PsbJ, PsbK, PsbL, PsbM, PsbT, PsbX, PsbY, PsbZ, Psb30/Ycf12, at least 3 peripheral proteins of the oxygen-evolving complex and a large number of cofactors. It forms dimeric complexes.

The protein localises to the plastid. It is found in the chloroplast thylakoid membrane. Functionally, one of the components of the core complex of photosystem II (PSII). PSII is a light-driven water:plastoquinone oxidoreductase that uses light energy to abstract electrons from H(2)O, generating O(2) and a proton gradient subsequently used for ATP formation. It consists of a core antenna complex that captures photons, and an electron transfer chain that converts photonic excitation into a charge separation. This subunit is found at the monomer-monomer interface. In Ceratophyllum demersum (Rigid hornwort), this protein is Photosystem II reaction center protein M.